Consider the following 116-residue polypeptide: Ribosome-binding factor A (116 aa).

Belongs to the RbfA family. In terms of assembly, monomer. Binds 30S ribosomal subunits, but not 50S ribosomal subunits or 70S ribosomes.

The protein resides in the cytoplasm. Functionally, one of several proteins that assist in the late maturation steps of the functional core of the 30S ribosomal subunit. Associates with free 30S ribosomal subunits (but not with 30S subunits that are part of 70S ribosomes or polysomes). Required for efficient processing of 16S rRNA. May interact with the 5'-terminal helix region of 16S rRNA. This Buchnera aphidicola subsp. Cinara cedri (strain Cc) protein is Ribosome-binding factor A.